A 486-amino-acid polypeptide reads, in one-letter code: G2/mitotic-specific cyclin-4 (486 aa).

Disordered stretches follow at residues 1 to 80 and 105 to 126; these read MRSY…SSNK and VLLN…DKEN. Positions 25 to 41 are enriched in polar residues; that stretch reads ANLSSNHTTAGQPSTSS. Residues 108–123 are compositionally biased toward acidic residues; the sequence is NDDDDETDDEFDDEED. A coiled-coil region spans residues 122–184; sequence EDKENRYHDL…QSHTQDMRSI (63 aa). The Cyclin N-terminal domain occupies 234 to 359; it reads EIFNYLHELE…FMIDVLEFDL (126 aa).

Belongs to the cyclin family. Cyclin AB subfamily. In terms of assembly, interacts with IQG1.

Functionally, 2/mitotic-specific cyclin essential for the control of the cell cycle at the G2/M (mitosis) transition. G2/M cyclins accumulate steadily during G2 and are abruptly destroyed at mitosis. Degradation is necessary for the cell to exit from mitosis. Plays a role in morphogenesis by negatively regulating polarized growth. Through binding to CDC28 regulates cytokinesis, partly by phosphorylation of the actomyosin ring component IQG1. The polypeptide is G2/mitotic-specific cyclin-4 (CLB4) (Candida albicans (strain SC5314 / ATCC MYA-2876) (Yeast)).